The chain runs to 105 residues: Meiotically up-regulated gene 52 protein (105 aa).

Has a role in meiosis. This chain is Meiotically up-regulated gene 52 protein (mug52), found in Schizosaccharomyces pombe (strain 972 / ATCC 24843) (Fission yeast).